The primary structure comprises 93 residues: Small ribosomal subunit protein uS19c (93 aa).

It belongs to the universal ribosomal protein uS19 family.

It localises to the plastid. Its subcellular location is the chloroplast. Its function is as follows. Protein S19 forms a complex with S13 that binds strongly to the 16S ribosomal RNA. This Brachypodium distachyon (Purple false brome) protein is Small ribosomal subunit protein uS19c.